We begin with the raw amino-acid sequence, 78 residues long: Large ribosomal subunit protein bL28 (78 aa).

It belongs to the bacterial ribosomal protein bL28 family.

The protein is Large ribosomal subunit protein bL28 of Pectobacterium atrosepticum (strain SCRI 1043 / ATCC BAA-672) (Erwinia carotovora subsp. atroseptica).